Here is a 70-residue protein sequence, read N- to C-terminus: Large ribosomal subunit protein uL29 (70 aa).

This sequence belongs to the universal ribosomal protein uL29 family.

The protein is Large ribosomal subunit protein uL29 of Rickettsia bellii (strain OSU 85-389).